The following is a 473-amino-acid chain: Protein translocase subunit SecD (473 aa).

6 helical membrane-spanning segments follow: residues 5–25 (VLVK…LLYP), 316–336 (ASLY…KSGG), 337–357 (IISN…MAAF), 364–384 (PGIA…VLIL), 409–429 (WSAI…LFQF), and 436–456 (GFAV…VFVT).

The protein belongs to the SecD/SecF family. SecD subfamily. In terms of assembly, forms a complex with SecF. Part of the essential Sec protein translocation apparatus which comprises SecA, SecYEG and auxiliary proteins SecDF. Other proteins may also be involved.

The protein resides in the cell inner membrane. In terms of biological role, part of the Sec protein translocase complex. Interacts with the SecYEG preprotein conducting channel. SecDF uses the proton motive force (PMF) to complete protein translocation after the ATP-dependent function of SecA. The polypeptide is Protein translocase subunit SecD (Elusimicrobium minutum (strain Pei191)).